The chain runs to 347 residues: MLTNPSQVIIRNQDSLNQHKVLVLNHEADLLPKALLDVAASVDALALDYHHYLHLVPHANSKLRCYFGHELPHQDPIKPEKYDTVIVYFPKAKPLAPYLFTLAANHLVPNGQLLVVGENKGGIKSLVKLLPEYFATGMKLDNARHCLLFGSNLEGRAPAMKLSDWVSQYQLSTPQGEISICNLVGVFSEKRLDQGTELLLSHLPTLSGRVLDFGCGAGVIAAALLKAQPHLSLECIDINAMALASCELTLAANGMTAKVYPSDGLAQTTGKFNGIISNPPFHDGLTSTTNIAKNFVTDSAKQLQHNGIWQIVANRHLPYSDIIAAEFGQLTVPAENNKYKLYYFQQQ.

Belongs to the methyltransferase superfamily. RsmC family. Monomer.

It localises to the cytoplasm. It carries out the reaction guanosine(1207) in 16S rRNA + S-adenosyl-L-methionine = N(2)-methylguanosine(1207) in 16S rRNA + S-adenosyl-L-homocysteine + H(+). In terms of biological role, specifically methylates the guanine in position 1207 of 16S rRNA in the 30S particle. In Shewanella putrefaciens (strain CN-32 / ATCC BAA-453), this protein is Ribosomal RNA small subunit methyltransferase C.